The sequence spans 194 residues: MDVNNVELIISAVRPEQYPETDLPEYALAGRSNVGKSSFINTMIRRKSMARISQKPGKTQTLNFYKIEEALFFVDVPGYGFAKVSKTEREKWGVMIETYITSREQLRGVIQIVDLRHKPTEDDRMMYEFLKYYDIPVIVIATKADKIPRSKWQKNAKIVRETLDFDPDDKFVLFSSETKMGKDEAWQFIKEGME.

The 173-residue stretch at 22–194 folds into the EngB-type G domain; sequence DLPEYALAGR…AWQFIKEGME (173 aa). GTP contacts are provided by residues 30–37, 57–61, 75–78, 142–145, and 174–176; these read GRSNVGKS, GKTQT, DVPG, TKAD, and FSS. Residues Ser37 and Thr59 each contribute to the Mg(2+) site.

Belongs to the TRAFAC class TrmE-Era-EngA-EngB-Septin-like GTPase superfamily. EngB GTPase family. Requires Mg(2+) as cofactor.

Its function is as follows. Necessary for normal cell division and for the maintenance of normal septation. The sequence is that of Probable GTP-binding protein EngB from Listeria monocytogenes serovar 1/2a (strain ATCC BAA-679 / EGD-e).